The sequence spans 235 residues: Segregation and condensation protein A (235 aa).

It belongs to the ScpA family. Component of a cohesin-like complex composed of ScpA, ScpB and the Smc homodimer, in which ScpA and ScpB bind to the head domain of Smc. The presence of the three proteins is required for the association of the complex with DNA.

It is found in the cytoplasm. Functionally, participates in chromosomal partition during cell division. May act via the formation of a condensin-like complex containing Smc and ScpB that pull DNA away from mid-cell into both cell halves. The sequence is that of Segregation and condensation protein A from Streptococcus agalactiae serotype Ia (strain ATCC 27591 / A909 / CDC SS700).